The following is a 107-amino-acid chain: Iron-sulfur cluster assembly protein CyaY (107 aa).

Belongs to the frataxin family.

Functionally, involved in iron-sulfur (Fe-S) cluster assembly. May act as a regulator of Fe-S biogenesis. The chain is Iron-sulfur cluster assembly protein CyaY from Yersinia pseudotuberculosis serotype O:1b (strain IP 31758).